The chain runs to 219 residues: Uracil-DNA glycosylase (219 aa).

D59 (proton acceptor) is an active-site residue.

Belongs to the uracil-DNA glycosylase (UDG) superfamily. UNG family.

The protein resides in the cytoplasm. The enzyme catalyses Hydrolyzes single-stranded DNA or mismatched double-stranded DNA and polynucleotides, releasing free uracil.. Functionally, excises uracil residues from the DNA which can arise as a result of misincorporation of dUMP residues by DNA polymerase or due to deamination of cytosine. The sequence is that of Uracil-DNA glycosylase from Macrococcus caseolyticus (strain JCSC5402) (Macrococcoides caseolyticum).